The following is a 505-amino-acid chain: Zealexin A1 synthase (505 aa).

A helical transmembrane segment spans residues 7-26 (IAVGTVAVVAVLSKLKSAVT). Position 442 (Cys-442) interacts with heme.

This sequence belongs to the cytochrome P450 family. It depends on heme as a cofactor.

It localises to the membrane. It carries out the reaction (S)-beta-macrocarpene + 3 reduced [NADPH--hemoprotein reductase] + 3 O2 = zealexin A1 + 3 oxidized [NADPH--hemoprotein reductase] + 4 H2O + 4 H(+). Functionally, involved in production of the antifungal phytoalexin zealexin A1. The enzyme sequentially oxidizes(S)-beta-macrocarpene via alcohol and aldehyde intermediates to form zealexin A1, a maize phytoalexin that provides biochemical protection against fungal infection. The chain is Zealexin A1 synthase from Zea mays (Maize).